Here is a 739-residue protein sequence, read N- to C-terminus: Phosphoribosylformylglycinamidine synthase subunit PurL (739 aa).

The active site involves His53. Positions 56 and 95 each coordinate ATP. Glu97 is a binding site for Mg(2+). Substrate is bound by residues 98 to 101 (SHNH) and Arg120. The active-site Proton acceptor is His99. A Mg(2+)-binding site is contributed by Asp121. A substrate-binding site is contributed by Gln244. Asp274 provides a ligand contact to Mg(2+). 318-320 (ESQ) is a binding site for substrate. Residues Asp501 and Gly538 each coordinate ATP. Asn539 contributes to the Mg(2+) binding site. Ser541 contacts substrate.

Belongs to the FGAMS family. Monomer. Part of the FGAM synthase complex composed of 1 PurL, 1 PurQ and 2 PurS subunits.

The protein resides in the cytoplasm. It catalyses the reaction N(2)-formyl-N(1)-(5-phospho-beta-D-ribosyl)glycinamide + L-glutamine + ATP + H2O = 2-formamido-N(1)-(5-O-phospho-beta-D-ribosyl)acetamidine + L-glutamate + ADP + phosphate + H(+). It participates in purine metabolism; IMP biosynthesis via de novo pathway; 5-amino-1-(5-phospho-D-ribosyl)imidazole from N(2)-formyl-N(1)-(5-phospho-D-ribosyl)glycinamide: step 1/2. In terms of biological role, part of the phosphoribosylformylglycinamidine synthase complex involved in the purines biosynthetic pathway. Catalyzes the ATP-dependent conversion of formylglycinamide ribonucleotide (FGAR) and glutamine to yield formylglycinamidine ribonucleotide (FGAM) and glutamate. The FGAM synthase complex is composed of three subunits. PurQ produces an ammonia molecule by converting glutamine to glutamate. PurL transfers the ammonia molecule to FGAR to form FGAM in an ATP-dependent manner. PurS interacts with PurQ and PurL and is thought to assist in the transfer of the ammonia molecule from PurQ to PurL. This Listeria monocytogenes serovar 1/2a (strain ATCC BAA-679 / EGD-e) protein is Phosphoribosylformylglycinamidine synthase subunit PurL.